Consider the following 174-residue polypeptide: Cytochrome c-type biogenesis protein CcmE (174 aa).

The Cytoplasmic portion of the chain corresponds to 1-8; that stretch reads MNPRRKSR. The helical; Signal-anchor for type II membrane protein transmembrane segment at 9–29 threads the bilayer; that stretch reads LSVVLFIFLGISVASALVLYA. The Periplasmic portion of the chain corresponds to 30–174; the sequence is LRQNIDLFYT…QEKQFKEGNQ (145 aa). Residues H131 and Y135 each contribute to the heme site. Residues 149–174 form a disordered region; sequence KPMGISDLKNESDRDRQEKQFKEGNQ. A compositionally biased stretch (basic and acidic residues) spans 156–174; sequence LKNESDRDRQEKQFKEGNQ.

This sequence belongs to the CcmE/CycJ family.

The protein localises to the cell inner membrane. Its function is as follows. Heme chaperone required for the biogenesis of c-type cytochromes. Transiently binds heme delivered by CcmC and transfers the heme to apo-cytochromes in a process facilitated by CcmF and CcmH. The chain is Cytochrome c-type biogenesis protein CcmE from Histophilus somni (strain 129Pt) (Haemophilus somnus).